The following is an 89-amino-acid chain: Small ribosomal subunit protein uS14 (89 aa).

It belongs to the universal ribosomal protein uS14 family. Part of the 30S ribosomal subunit. Contacts proteins S3 and S10.

Its function is as follows. Binds 16S rRNA, required for the assembly of 30S particles and may also be responsible for determining the conformation of the 16S rRNA at the A site. The chain is Small ribosomal subunit protein uS14 from Porphyromonas gingivalis (strain ATCC 33277 / DSM 20709 / CIP 103683 / JCM 12257 / NCTC 11834 / 2561).